The chain runs to 541 residues: Eukaryotic translation initiation factor 3 subunit L (541 aa).

The 209-residue stretch at 308–516 (TFSDILLYIQ…IHIADTKVSH (209 aa)) folds into the PCI domain.

The protein belongs to the eIF-3 subunit L family. In terms of assembly, component of the eukaryotic translation initiation factor 3 (eIF-3) complex. The eIF-3 complex interacts with pix.

Its subcellular location is the cytoplasm. Component of the eukaryotic translation initiation factor 3 (eIF-3) complex, which is involved in protein synthesis of a specialized repertoire of mRNAs and, together with other initiation factors, stimulates binding of mRNA and methionyl-tRNAi to the 40S ribosome. The eIF-3 complex specifically targets and initiates translation of a subset of mRNAs involved in cell proliferation. This is Eukaryotic translation initiation factor 3 subunit L from Drosophila persimilis (Fruit fly).